The following is a 313-amino-acid chain: Protein FixB (313 aa).

Residue 255 to 283 (LYLAVGISGQIQHMVGANASQTIFAINKD) coordinates FAD.

Belongs to the ETF alpha-subunit/FixB family. In terms of assembly, heterodimer of FixA and FixB.

Its pathway is amine and polyamine metabolism; carnitine metabolism. Required for anaerobic carnitine reduction. May bring reductant to CaiA. This chain is Protein FixB, found in Escherichia coli O6:K15:H31 (strain 536 / UPEC).